We begin with the raw amino-acid sequence, 223 residues long: Octanoyltransferase (223 aa).

The 176-residue stretch at 32–207 (DETPDEIWLV…HFAHHLAITD (176 aa)) folds into the BPL/LPL catalytic domain. Substrate-binding positions include 71–78 (RGGQVTYH), 138–140 (SLG), and 151–153 (GLA). Cysteine 169 serves as the catalytic Acyl-thioester intermediate.

This sequence belongs to the LipB family.

It is found in the cytoplasm. It catalyses the reaction octanoyl-[ACP] + L-lysyl-[protein] = N(6)-octanoyl-L-lysyl-[protein] + holo-[ACP] + H(+). Its pathway is protein modification; protein lipoylation via endogenous pathway; protein N(6)-(lipoyl)lysine from octanoyl-[acyl-carrier-protein]: step 1/2. Functionally, catalyzes the transfer of endogenously produced octanoic acid from octanoyl-acyl-carrier-protein onto the lipoyl domains of lipoate-dependent enzymes. Lipoyl-ACP can also act as a substrate although octanoyl-ACP is likely to be the physiological substrate. The polypeptide is Octanoyltransferase (Erwinia tasmaniensis (strain DSM 17950 / CFBP 7177 / CIP 109463 / NCPPB 4357 / Et1/99)).